Reading from the N-terminus, the 331-residue chain is 6-phosphogluconolactonase (331 aa).

Position 287 is an N6-acetyllysine (Lys287).

Belongs to the cycloisomerase 2 family.

It catalyses the reaction 6-phospho-D-glucono-1,5-lactone + H2O = 6-phospho-D-gluconate + H(+). The protein operates within carbohydrate degradation; pentose phosphate pathway; D-ribulose 5-phosphate from D-glucose 6-phosphate (oxidative stage): step 2/3. In terms of biological role, catalyzes the hydrolysis of 6-phosphogluconolactone to 6-phosphogluconate. This chain is 6-phosphogluconolactonase, found in Escherichia coli O8 (strain IAI1).